Consider the following 215-residue polypeptide: Small ribosomal subunit protein uS3 (215 aa).

A KH type-2 domain is found at 39–107 (VRQYLQKKLA…PVHINIEEIR (69 aa)).

Belongs to the universal ribosomal protein uS3 family. In terms of assembly, part of the 30S ribosomal subunit. Forms a tight complex with proteins S10 and S14.

Its function is as follows. Binds the lower part of the 30S subunit head. Binds mRNA in the 70S ribosome, positioning it for translation. The protein is Small ribosomal subunit protein uS3 of Nitrosomonas europaea (strain ATCC 19718 / CIP 103999 / KCTC 2705 / NBRC 14298).